The primary structure comprises 145 residues: 3-hydroxyacyl-[acyl-carrier-protein] dehydratase FabZ (145 aa).

Residue His49 is part of the active site.

It belongs to the thioester dehydratase family. FabZ subfamily.

The protein resides in the cytoplasm. The catalysed reaction is a (3R)-hydroxyacyl-[ACP] = a (2E)-enoyl-[ACP] + H2O. Involved in unsaturated fatty acids biosynthesis. Catalyzes the dehydration of short chain beta-hydroxyacyl-ACPs and long chain saturated and unsaturated beta-hydroxyacyl-ACPs. In Ehrlichia ruminantium (strain Welgevonden), this protein is 3-hydroxyacyl-[acyl-carrier-protein] dehydratase FabZ.